Reading from the N-terminus, the 525-residue chain is CBL-interacting protein kinase 21 (525 aa).

The 256-residue stretch at 87–342 folds into the Protein kinase domain; sequence YEMGRALGEG…ITGIRAHEWF (256 aa). ATP-binding positions include 93–101 and Lys116; that span reads LGEGHFGKV. The Proton acceptor role is filled by Asp210. Residues 228 to 257 form an activation loop region; the sequence is DFGLSALPQNQRKDGLLHTTCGSPNYIAPE. An NAF domain is found at 372–401; it reads DIETSPAISQINAFQLIGMSSCLDLSGFFE. The tract at residues 407–436 is PPI; sequence ERKIRFVSNYSPTSLFEKIESTVTEKGFQV.

This sequence belongs to the protein kinase superfamily. CAMK Ser/Thr protein kinase family. SNF1 subfamily. It depends on Mn(2+) as a cofactor.

It catalyses the reaction L-seryl-[protein] + ATP = O-phospho-L-seryl-[protein] + ADP + H(+). The catalysed reaction is L-threonyl-[protein] + ATP = O-phospho-L-threonyl-[protein] + ADP + H(+). Its function is as follows. CIPK serine-threonine protein kinases interact with CBL proteins. Binding of a CBL protein to the regulatory NAF domain of CIPK protein lead to the activation of the kinase in a calcium-dependent manner. The chain is CBL-interacting protein kinase 21 (CIPK21) from Oryza sativa subsp. japonica (Rice).